Here is a 237-residue protein sequence, read N- to C-terminus: Putative glutathione-dependent formaldehyde-activating enzyme (237 aa).

The 115-residue stretch at 38–152 (ITLICHCPPS…LGQSGGSEGE (115 aa)) folds into the CENP-V/GFA domain. Zn(2+) contacts are provided by C42, C44, C67, C69, C72, C114, and C117.

It belongs to the Gfa family. Requires Zn(2+) as cofactor.

It catalyses the reaction S-(hydroxymethyl)glutathione = glutathione + formaldehyde. It functions in the pathway one-carbon metabolism; formaldehyde degradation; formate from formaldehyde (glutathione route): step 1/3. Catalyzes the condensation of formaldehyde and glutathione to S-hydroxymethylglutathione. In Sordaria macrospora (strain ATCC MYA-333 / DSM 997 / K(L3346) / K-hell), this protein is Putative glutathione-dependent formaldehyde-activating enzyme.